Here is a 139-residue protein sequence, read N- to C-terminus: Large ribosomal subunit protein uL16 (139 aa).

Residues 1 to 21 (MLMPKRVQYRKTQRGRMKGNA) are disordered. Residues 7-17 (VQYRKTQRGRM) are compositionally biased toward basic residues.

Belongs to the universal ribosomal protein uL16 family. In terms of assembly, part of the 50S ribosomal subunit.

Its function is as follows. Binds 23S rRNA and is also seen to make contacts with the A and possibly P site tRNAs. In Chlorobaculum tepidum (strain ATCC 49652 / DSM 12025 / NBRC 103806 / TLS) (Chlorobium tepidum), this protein is Large ribosomal subunit protein uL16.